The sequence spans 94 residues: Alpha-elapitoxin-Nss2a (94 aa).

The first 21 residues, 1–21 (MKTLLLTLVVVTIVCLDLGDS), serve as a signal peptide directing secretion. Disulfide bonds link Cys24–Cys41, Cys34–Cys62, Cys47–Cys51, Cys66–Cys77, and Cys78–Cys83.

This sequence belongs to the three-finger toxin family. Long-chain subfamily. Type II alpha-neurotoxin sub-subfamily. As to expression, expressed by the venom gland.

The protein localises to the secreted. Functionally, binds with high affinity to muscular (alpha-1/CHRNA1) and neuronal (alpha-7/CHRNA7) nicotinic acetylcholine receptor (nAChR) and inhibits acetylcholine from binding to the receptor, thereby impairing neuromuscular and neuronal transmission. The sequence is that of Alpha-elapitoxin-Nss2a from Notechis scutatus scutatus (Mainland tiger snake).